The sequence spans 340 residues: MKVSIVGITGYSGLELVRILNGHQKVELVSVHATKEIGTKLSDIYSYLKGICDLEIQSFDSQKIMATADLVFFATPSGVAKELAKDFIAADFPVIDISGDHRLPAAIYEKWYKKAAAEQASLDKFTYALAELTDVKGKKFIANPGCYATATELALLPLVKEKLIDVNSIIVDAKSGLTGAGKVLSESSHFVNVHDNYVTYKLNRHQHIPEIVQELKRFDNNLEHIQFSTSLLPVNRGIMATCYVTLKKPLSNEAVSKIYQDLYADKPFVRLQQDLPELHNVIGSNFCDIGFAYNPVTNVLTVISVIDNLVKGAAGQAVQNLNLMMGWDETEGFPMTPSYL.

Cysteine 146 is an active-site residue.

Belongs to the NAGSA dehydrogenase family. Type 1 subfamily.

The protein localises to the cytoplasm. The catalysed reaction is N-acetyl-L-glutamate 5-semialdehyde + phosphate + NADP(+) = N-acetyl-L-glutamyl 5-phosphate + NADPH + H(+). It participates in amino-acid biosynthesis; L-arginine biosynthesis; N(2)-acetyl-L-ornithine from L-glutamate: step 3/4. In terms of biological role, catalyzes the NADPH-dependent reduction of N-acetyl-5-glutamyl phosphate to yield N-acetyl-L-glutamate 5-semialdehyde. This is N-acetyl-gamma-glutamyl-phosphate reductase from Streptococcus mutans serotype c (strain ATCC 700610 / UA159).